Consider the following 343-residue polypeptide: N-acetyl-gamma-glutamyl-phosphate reductase (343 aa).

Cys147 is an active-site residue.

It belongs to the NAGSA dehydrogenase family. Type 1 subfamily.

It is found in the cytoplasm. It catalyses the reaction N-acetyl-L-glutamate 5-semialdehyde + phosphate + NADP(+) = N-acetyl-L-glutamyl 5-phosphate + NADPH + H(+). The protein operates within amino-acid biosynthesis; L-arginine biosynthesis; N(2)-acetyl-L-ornithine from L-glutamate: step 3/4. Catalyzes the NADPH-dependent reduction of N-acetyl-5-glutamyl phosphate to yield N-acetyl-L-glutamate 5-semialdehyde. The chain is N-acetyl-gamma-glutamyl-phosphate reductase from Listeria monocytogenes serotype 4a (strain HCC23).